The sequence spans 627 residues: MAGERPPLRGPGPGEAPGEGPGGAGGGPGRGRPSSYRALRSAVSSLARVDDFDCAEKIGAGFFSEVYKVRHRQSGQVMVLKMNKLPSNRSNTLREVQLMNRLRHPNILRFMGVCVHQGQLHALTEYMNGGTLEQLLSSPEPLSWPVRLHLALDIAQGLRYLHAKGVFHRDLTSKNCLVRREDRGFTAVVGDFGLAEKIPVYREGTRKEPLAVVGSPYWMAPEVLRGELYDEKADVFAFGIVLCELIARVPADPDYLPRTEDFGLDVPAFRTLVGNDCPLPFLLLAIHCCSMEPSTRAPFTEITQHLEQILEQQPEATPLAKPPLTKAPLTYNQGSVPRGGPSATLPRPDPRLSRSRSDLFLPPSPESPPSWGDNLTRVNPFSLREDLRGGKIKLLDTPCKPATPLPLVPPSPLTSTQLPLVTTPDILVQPETPVRRCRSLPSSPELPRRMETALPGPGPSPMGPTEERMDCEGSSPEPEPPGLAPQLPLAVATDNFISTCSSASQPWSPRSGPPLNNNPPAVVVNSPQGWAREPWNRAQHSLPRAAALERTEPSPPPSAPREPEEGLPCPGCCLGPFSFGFLSMCPRPTPAVARYRNLNCEAGSLLCHRGHHAKPPTPSLQLPGARS.

The disordered stretch occupies residues 1–36; it reads MAGERPPLRGPGPGEAPGEGPGGAGGGPGRGRPSSY. The span at 11 to 30 shows a compositional bias: gly residues; sequence PGPGEAPGEGPGGAGGGPGR. Residues 52-309 enclose the Protein kinase domain; it reads FDCAEKIGAG…TEITQHLEQI (258 aa). ATP contacts are provided by residues 58 to 66 and Lys-81; that span reads IGAGFFSEV. The Proton acceptor role is filled by Asp-170. Ser-215 is modified (phosphoserine; by autocatalysis). The segment covering 316–330 has biased composition (low complexity); the sequence is ATPLAKPPLTKAPLT. Disordered stretches follow at residues 316-373, 436-485, 500-519, and 532-565; these read ATPL…SWGD, RCRS…GLAP, CSSA…NNNP, and REPW…EPEE. Arg-338 bears the Omega-N-methylarginine mark. A compositionally biased stretch (basic and acidic residues) spans 348-357; the sequence is PDPRLSRSRS. The required for interaction with YWHAB stretch occupies residues 421–525; that stretch reads VTTPDILVQP…NNNPPAVVVN (105 aa). The segment at 528–625 is required for interaction with PARVA; it reads QGWAREPWNR…PTPSLQLPGA (98 aa). The segment at 528 to 627 is required for interaction with SPRED1 and SPRY2. Required for TESK1-mediated dephosphorylation of SPRY2 and SPRY2 inhibition of ERK phosphorylation; that stretch reads QGWAREPWNR…PSLQLPGARS (100 aa).

Belongs to the protein kinase superfamily. TKL Ser/Thr protein kinase family. As to quaternary structure, interacts (via both C- and N-termini) with SPRY4 (via C-terminus); the interaction inhibits TESK1 kinase activity. Interacts with TAOK1; the interaction inhibits TAOK1 kinase activity. Interacts (via C-terminus) with SPRED1 (via C-terminus); the interaction inhibits TESK1 kinase activity. Interacts (via C-terminus) with PARVA/PARVIN (via C-terminus); the interaction inhibits TESK1 kinase activity. Interacts with YWHAB/14-3-3 beta; the interaction is dependent on the phosphorylation of TESK1 Ser-439 and inhibits TESK1 kinase activity. Interacts with SPRY1, SPRY3 and SPRED2. Interacts (via C-terminus) with SPRY2 (via C-terminus); the interaction disrupts SPRY2 interaction with PPP2CA/PP2A-C, possibly by vesicular sequestration of SPRY2. Therefore dephosphorylation of SPRY2 by the serine/threonine-protein phosphatase 2A (PP2A) holoenzyme is lost, inhibiting its interaction with GRB2. The cofactor is Mg(2+). Mn(2+) is required as a cofactor. In terms of processing, autophosphorylated on serine and tyrosine residues. Expressed in testes and brain (at protein level).

Its subcellular location is the cytoplasm. It localises to the perinuclear region. The protein resides in the cytoskeleton. It is found in the microtubule organizing center. The protein localises to the centrosome. Its subcellular location is the cell projection. It localises to the lamellipodium. It carries out the reaction L-seryl-[protein] + ATP = O-phospho-L-seryl-[protein] + ADP + H(+). The catalysed reaction is L-threonyl-[protein] + ATP = O-phospho-L-threonyl-[protein] + ADP + H(+). It catalyses the reaction L-tyrosyl-[protein] + ATP = O-phospho-L-tyrosyl-[protein] + ADP + H(+). Its activity is regulated as follows. Activated by autophosphorylation on Ser-215. Kinase activity is inhibited by SPRED1. Dual specificity protein kinase activity catalyzing autophosphorylation and phosphorylation of exogenous substrates on both serine/threonine and tyrosine residues. Regulates the cellular cytoskeleton by enhancing actin stress fiber formation via phosphorylation of cofilin and by preventing microtubule breakdown via inhibition of TAOK1/MARKK kinase activity. Inhibits podocyte motility via regulation of actin cytoskeletal dynamics and phosphorylation of CFL1. Positively regulates integrin-mediated cell spreading, via phosphorylation of cofilin. Suppresses ciliogenesis via multiple pathways; phosphorylation of CFL1, suppression of ciliary vesicle directional trafficking to the ciliary base, and by facilitating YAP1 nuclear localization where it acts as a transcriptional corepressor of the TEAD4 target genes AURKA and PLK1. Probably plays a central role at and after the meiotic phase of spermatogenesis. This chain is Dual specificity testis-specific protein kinase 1 (Tesk1), found in Mus musculus (Mouse).